Here is a 215-residue protein sequence, read N- to C-terminus: Virulence protein YscR (215 aa).

4 consecutive transmembrane segments (helical) span residues 10–30, 53–73, 156–176, and 188–208; these read LIGI…GTSF, IALY…TLLA, IGLL…NILL, and ISLP…LTLA.

It belongs to the FliP/MopC/SpaP family.

The protein resides in the cell membrane. This is Virulence protein YscR (yscR) from Salmonella typhimurium (strain LT2 / SGSC1412 / ATCC 700720).